A 71-amino-acid chain; its full sequence is UPF0346 protein BCQ_2236 (71 aa).

Belongs to the UPF0346 family.

The protein is UPF0346 protein BCQ_2236 of Bacillus cereus (strain Q1).